The chain runs to 260 residues: Type III pantothenate kinase (260 aa).

Residue aspartate 6–threonine 13 coordinates ATP. Glycine 107 to arginine 110 is a substrate binding site. The active-site Proton acceptor is the aspartate 109. A K(+)-binding site is contributed by aspartate 129. Residue threonine 132 participates in ATP binding. Substrate is bound at residue threonine 184.

The protein belongs to the type III pantothenate kinase family. Homodimer. The cofactor is NH4(+). K(+) serves as cofactor.

It is found in the cytoplasm. It catalyses the reaction (R)-pantothenate + ATP = (R)-4'-phosphopantothenate + ADP + H(+). It participates in cofactor biosynthesis; coenzyme A biosynthesis; CoA from (R)-pantothenate: step 1/5. Catalyzes the phosphorylation of pantothenate (Pan), the first step in CoA biosynthesis. In Agathobacter rectalis (strain ATCC 33656 / DSM 3377 / JCM 17463 / KCTC 5835 / VPI 0990) (Eubacterium rectale), this protein is Type III pantothenate kinase.